The primary structure comprises 560 residues: Formate--tetrahydrofolate ligase (560 aa).

69 to 76 contributes to the ATP binding site; the sequence is TPAGEGKS.

Belongs to the formate--tetrahydrofolate ligase family.

The enzyme catalyses (6S)-5,6,7,8-tetrahydrofolate + formate + ATP = (6R)-10-formyltetrahydrofolate + ADP + phosphate. The protein operates within one-carbon metabolism; tetrahydrofolate interconversion. The polypeptide is Formate--tetrahydrofolate ligase (Listeria monocytogenes serotype 4b (strain CLIP80459)).